An 876-amino-acid chain; its full sequence is MSGEESMPDEEQKQSEEEEEMIRKRTLAMRKKVEEIMRNGAGLVRESNGLPKAGADYELYNSYPTFNTFMKRSEQRLNALMNKVTKSIGCAMRVPDVGSSVEHYTECVIEAQDNIAERAATLHEALKKAELDEIVKVPEFITKAAPTNRKTEAEVSAAMRTFSANIGTVLAEKFRERREEAAQMVVLEKPQKTYNISSDNSQAPFSSKLTVKHHAIEKRTGIVLHDDDESGRRDWISAETETEEEHPYIAEILHFKVPEAQLKSAECLKFTALKDTPLTMIDTKEKLEALTKTLNSVKEFAVDLEHHQMRSYLGLTCLIQISTRDEDFIIDPFPIWDHVGMLNEPFANPRILKVFHGSDSDVLWLQRDYGVHVVNLFDTYVAMKKLKYPKFSLAYLTLRFADVVLDKQYQLADWRARPLRNAMINYAREDTHYLLYSYDMLREQLLKQDTKDLANVYSESSDLCIKVYKKPVFNPKGYLTEIKFRFTLNTRQDYALTHLFKWRDVVARAEDESPHFVLPNHMMLSLSETLPRDVGGIYACCNPLPYFVKQRTGDILKIIVEARDVKLEKVGLSAKERNDAQEARGVMNDTMDHITSVLKSKIDFSHTRFDEERGEIYIDKTDEGMDIELKDHKESLLSVLQTAEIPSVETMIVVEKGKKSDNQKVKKLLNELDKFVTPFECYQMMMITKEKQEEEERKEAERKKLEEGDLPKTMFSHHDAPINRKPEFDAKLLNVDTLKLVPDDPNKPKDPEPSPMEESSSEPQIFDPSRFTDDQLLSKKAMKRKRDAARRNIDVSVVLGESSSSSDPKKKKSDDDAPVEDFDYEKADSSAFEKPVRDNNADFDPFHQKYRLKNKTKKNMAMKKSSNRQGTINYKK.

Residues 1 to 22 (MSGEESMPDEEQKQSEEEEEMI) form a disordered region. Positions 279-445 (TMIDTKEKLE…YSYDMLREQL (167 aa)) constitute a 3'-5' exonuclease domain. Residues aspartate 303, glutamate 305, aspartate 361, and aspartate 430 each coordinate Mg(2+). The region spanning 489–569 (NTRQDYALTH…VEARDVKLEK (81 aa)) is the HRDC domain. Composition is skewed to basic and acidic residues over residues 690–730 (EKQE…EFDA), 741–752 (VPDDPNKPKDPE), and 834–847 (KPVR…DPFH). The disordered stretch occupies residues 690 to 876 (EKQEEEERKE…NRQGTINYKK (187 aa)). The span at 848 to 861 (QKYRLKNKTKKNMA) shows a compositional bias: basic residues.

Belongs to the exosome component 10/RRP6 family. As to quaternary structure, component of the RNA exosome complex. Interacts with crn-5. Requires Mg(2+) as cofactor. As to expression, ubiquitously expressed.

The protein localises to the nucleus. Its subcellular location is the nucleolus. The protein resides in the nucleoplasm. In terms of biological role, catalytic component of the RNA exosome complex which has 3'-&gt;5' exoribonuclease activity and participates in a multitude of cellular RNA processing and degradation events. Involved in apoptotic DNA degradation. Involved in regulation of antisense ribosomal siRNA production. Involved in response to cold-warm shock. This chain is Exosome complex component 10 homolog, found in Caenorhabditis elegans.